We begin with the raw amino-acid sequence, 379 residues long: tRNA 2-selenouridine synthase (379 aa).

The Rhodanese domain maps to F15–E138. The active-site S-selanylcysteine intermediate is C98.

The protein belongs to the SelU family. As to quaternary structure, monomer.

It catalyses the reaction 5-methylaminomethyl-2-thiouridine(34) in tRNA + selenophosphate + (2E)-geranyl diphosphate + H2O + H(+) = 5-methylaminomethyl-2-selenouridine(34) in tRNA + (2E)-thiogeraniol + phosphate + diphosphate. It carries out the reaction 5-methylaminomethyl-2-thiouridine(34) in tRNA + (2E)-geranyl diphosphate = 5-methylaminomethyl-S-(2E)-geranyl-thiouridine(34) in tRNA + diphosphate. The catalysed reaction is 5-methylaminomethyl-S-(2E)-geranyl-thiouridine(34) in tRNA + selenophosphate + H(+) = 5-methylaminomethyl-2-(Se-phospho)selenouridine(34) in tRNA + (2E)-thiogeraniol. The enzyme catalyses 5-methylaminomethyl-2-(Se-phospho)selenouridine(34) in tRNA + H2O = 5-methylaminomethyl-2-selenouridine(34) in tRNA + phosphate. Its function is as follows. Involved in the post-transcriptional modification of the uridine at the wobble position (U34) of tRNA(Lys), tRNA(Glu) and tRNA(Gln). Catalyzes the conversion of 2-thiouridine (S2U-RNA) to 2-selenouridine (Se2U-RNA). Acts in a two-step process involving geranylation of 2-thiouridine (S2U) to S-geranyl-2-thiouridine (geS2U) and subsequent selenation of the latter derivative to 2-selenouridine (Se2U) in the tRNA chain. This is tRNA 2-selenouridine synthase from Bdellovibrio bacteriovorus (strain ATCC 15356 / DSM 50701 / NCIMB 9529 / HD100).